Consider the following 246-residue polypeptide: tRNA (guanine-N(1)-)-methyltransferase (246 aa).

S-adenosyl-L-methionine is bound by residues Gly-114 and 133–138 (LGDYVL).

The protein belongs to the RNA methyltransferase TrmD family. Homodimer.

The protein localises to the cytoplasm. The catalysed reaction is guanosine(37) in tRNA + S-adenosyl-L-methionine = N(1)-methylguanosine(37) in tRNA + S-adenosyl-L-homocysteine + H(+). Its function is as follows. Specifically methylates guanosine-37 in various tRNAs. In Enterococcus faecalis (strain ATCC 700802 / V583), this protein is tRNA (guanine-N(1)-)-methyltransferase.